The following is a 567-amino-acid chain: Geranylgeranyl transferase type-2 subunit alpha (567 aa).

6 PFTA repeats span residues 44–78 (LDES…QLET), 88–122 (LVKA…RLPE), 124–158 (NWTR…QAAV), 159–193 (PPAE…QLHP), 207–241 (VLLK…RADP), and 363–397 (VLQS…ALDP). Position 98 is a phosphoserine (Ser-98). 5 LRR repeats span residues 442-463 (EVRV…EQLL), 464-486 (LVTH…AALR), 487-508 (CLEV…TNLP), 509-530 (RLQE…QPLA), and 534-555 (RLVL…LEQL).

This sequence belongs to the protein prenyltransferase subunit alpha family. In terms of assembly, heterotrimer composed of RABGGTA, RABGGTB and CHM; within this trimer, RABGGTA and RABGGTB form the catalytic component B, while CHM (component A) mediates peptide substrate binding. The Rab GGTase dimer (RGGT) interacts with CHM (component A) prior to Rab protein binding; the association is stabilized by geranylgeranyl pyrophosphate (GGpp). The CHM:RGGT:Rab complex is destabilized by GGpp. Interacts with non-phosphorylated form of RAB8A; phosphorylation of RAB8A at 'Thr-72' disrupts this interaction.

It carries out the reaction geranylgeranyl diphosphate + L-cysteinyl-[protein] = S-geranylgeranyl-L-cysteinyl-[protein] + diphosphate. The enzymatic reaction requires the aid of a Rab escort protein (also called component A), such as CHM. Catalyzes the transfer of a geranylgeranyl moiety from geranylgeranyl diphosphate to both cysteines of Rab proteins with the C-terminal sequence -XXCC, -XCXC and -CCXX, such as RAB1A, RAB3A, RAB5A and RAB7A. The chain is Geranylgeranyl transferase type-2 subunit alpha (RABGGTA) from Homo sapiens (Human).